The primary structure comprises 503 residues: Carboxyl-terminal PDZ ligand of neuronal nitric oxide synthase protein (503 aa).

The PID domain maps to 26–191; that stretch reads FQHGISFEAK…ESERNSDGSG (166 aa). Positions 170–212 are disordered; that stretch reads HTQQNADGQEDGESERNSDGSGDPGRQLTGAERVSTATAEETD. Ser-183, Ser-187, Ser-190, and Ser-262 each carry phosphoserine. A disordered region spans residues 266–285; that stretch reads LLPSSSSSKPPGLGTGTPLS. A coiled-coil region spans residues 319–360; that stretch reads AAEAAARLEAQARVHQLLLQNKDMLQHISLLVKQVQELELKL. Ser-368, Ser-371, Ser-398, and Ser-414 each carry phosphoserine. The interaction with NOS1 stretch occupies residues 491–503; sequence QELGDSLDDEIAV. A PDZ-binding motif is present at residues 501–503; that stretch reads IAV.

As to quaternary structure, interacts with the PDZ domain of NOS1 or the second PDZ domain of DLG4 through its C-terminus. Interacts with RASD1 and SYN1, SYN2 and SYN3 via its PID domain. Forms a ternary complex with NOS1 and RASD1. Forms a ternary complex with NOS1 and SYN1. In terms of tissue distribution, mainly expressed in brain. Highly expressed in accessory olfactory bulb, caudate-putamen, cerebellum, cerebral cortex, dentate gyrus of the hippocampus, islands of Calleja, olfactory bulb and supraoptic nucleus. Expressed in kidney glomeruli podocytes (at protein level).

Its subcellular location is the cell projection. The protein localises to the filopodium. The protein resides in the podosome. Adapter protein involved in neuronal nitric-oxide (NO) synthesis regulation via its association with nNOS/NOS1. The complex formed with NOS1 and synapsins is necessary for specific NO and synapsin functions at a presynaptic level. Mediates an indirect interaction between NOS1 and RASD1 leading to enhance the ability of NOS1 to activate RASD1. Competes with DLG4 for interaction with NOS1, possibly affecting NOS1 activity by regulating the interaction between NOS1 and DLG4. In kidney podocytes, plays a role in podosomes and filopodia formation through CDC42 activation. This Rattus norvegicus (Rat) protein is Carboxyl-terminal PDZ ligand of neuronal nitric oxide synthase protein.